Reading from the N-terminus, the 217-residue chain is Histone H1-gamma, late (217 aa).

Disordered stretches follow at residues 1 to 21 (MSAA…HPPS) and 80 to 217 (GKGA…PAKK). Positions 17 to 91 (AHPPSSQMVV…GASGSFKLGK (75 aa)) constitute an H15 domain. Basic residues predominate over residues 104–113 (IAAKKAKLAA). Positions 114-123 (KKKEQREKKA) are enriched in basic and acidic residues. Basic residues predominate over residues 124 to 217 (LKTKARKEKV…AKKAAKPAKK (94 aa)).

It belongs to the histone H1/H5 family.

The protein localises to the nucleus. The protein resides in the chromosome. Its function is as follows. Histones H1 are necessary for the condensation of nucleosome chains into higher-order structures. This Strongylocentrotus purpuratus (Purple sea urchin) protein is Histone H1-gamma, late.